The sequence spans 97 residues: Probable lipopolysaccharide assembly protein A (97 aa).

Helical transmembrane passes span 1 to 21 and 46 to 66; these read MIKY…AITI and VAIL…FFYI. Residues 67 to 95 are a coiled coil; it reads KLKLKNMALARQVKRQTLQINELTTTRDK.

This sequence belongs to the LapA family.

Its subcellular location is the cell inner membrane. In terms of biological role, involved in the assembly of lipopolysaccharide (LPS). The polypeptide is Probable lipopolysaccharide assembly protein A (Haemophilus influenzae (strain ATCC 51907 / DSM 11121 / KW20 / Rd)).